The chain runs to 133 residues: Small ribosomal subunit protein uS8 (133 aa).

It belongs to the universal ribosomal protein uS8 family. In terms of assembly, part of the 30S ribosomal subunit. Contacts proteins S5 and S12.

Functionally, one of the primary rRNA binding proteins, it binds directly to 16S rRNA central domain where it helps coordinate assembly of the platform of the 30S subunit. In Amoebophilus asiaticus (strain 5a2), this protein is Small ribosomal subunit protein uS8.